Here is a 166-residue protein sequence, read N- to C-terminus: Cytochrome c-type biogenesis protein CcmE (166 aa).

Topologically, residues 1 to 7 (MTRKQKR) are cytoplasmic. The chain crosses the membrane as a helical; Signal-anchor for type II membrane protein span at residues 8 to 28 (LALIASGAVVVSLAVGLVMFA). The Periplasmic portion of the chain corresponds to 29 to 166 (LRDNIVFFYS…QTAPQGAQAY (138 aa)). His-122 and Tyr-126 together coordinate heme. The interval 139–166 (GVWQEEGKSEGKPSAIPAQTAPQGAQAY) is disordered.

This sequence belongs to the CcmE/CycJ family.

Its subcellular location is the cell inner membrane. Functionally, heme chaperone required for the biogenesis of c-type cytochromes. Transiently binds heme delivered by CcmC and transfers the heme to apo-cytochromes in a process facilitated by CcmF and CcmH. The polypeptide is Cytochrome c-type biogenesis protein CcmE (Methylocella silvestris (strain DSM 15510 / CIP 108128 / LMG 27833 / NCIMB 13906 / BL2)).